A 190-amino-acid chain; its full sequence is Peptidyl-tRNA hydrolase (190 aa).

Position 14 (Y14) interacts with tRNA. H19 functions as the Proton acceptor in the catalytic mechanism. TRNA-binding residues include Y64, N66, and N112.

Belongs to the PTH family. As to quaternary structure, monomer.

Its subcellular location is the cytoplasm. It carries out the reaction an N-acyl-L-alpha-aminoacyl-tRNA + H2O = an N-acyl-L-amino acid + a tRNA + H(+). Its function is as follows. Hydrolyzes ribosome-free peptidyl-tRNAs (with 1 or more amino acids incorporated), which drop off the ribosome during protein synthesis, or as a result of ribosome stalling. In terms of biological role, catalyzes the release of premature peptidyl moieties from peptidyl-tRNA molecules trapped in stalled 50S ribosomal subunits, and thus maintains levels of free tRNAs and 50S ribosomes. This Pelodictyon phaeoclathratiforme (strain DSM 5477 / BU-1) protein is Peptidyl-tRNA hydrolase.